The following is a 154-amino-acid chain: Crossover junction endodeoxyribonuclease RuvC (154 aa).

Active-site residues include Asp7, Glu67, and Asp139. Residues Asp7, Glu67, and Asp139 each contribute to the Mg(2+) site.

This sequence belongs to the RuvC family. As to quaternary structure, homodimer which binds Holliday junction (HJ) DNA. The HJ becomes 2-fold symmetrical on binding to RuvC with unstacked arms; it has a different conformation from HJ DNA in complex with RuvA. In the full resolvosome a probable DNA-RuvA(4)-RuvB(12)-RuvC(2) complex forms which resolves the HJ. It depends on Mg(2+) as a cofactor.

The protein localises to the cytoplasm. The enzyme catalyses Endonucleolytic cleavage at a junction such as a reciprocal single-stranded crossover between two homologous DNA duplexes (Holliday junction).. In terms of biological role, the RuvA-RuvB-RuvC complex processes Holliday junction (HJ) DNA during genetic recombination and DNA repair. Endonuclease that resolves HJ intermediates. Cleaves cruciform DNA by making single-stranded nicks across the HJ at symmetrical positions within the homologous arms, yielding a 5'-phosphate and a 3'-hydroxyl group; requires a central core of homology in the junction. The consensus cleavage sequence is 5'-(A/T)TT(C/G)-3'. Cleavage occurs on the 3'-side of the TT dinucleotide at the point of strand exchange. HJ branch migration catalyzed by RuvA-RuvB allows RuvC to scan DNA until it finds its consensus sequence, where it cleaves and resolves the cruciform DNA. The protein is Crossover junction endodeoxyribonuclease RuvC of Synechococcus sp. (strain CC9902).